A 455-amino-acid polypeptide reads, in one-letter code: MLKDFTRKKVLVIGAGRSGLAVSRFLVKKGASVVLADAGKPDYPDGELEDLTAAGVELSLGGYPGVGKESVDLVVVSPGVPLTVEPVRAAVREGIPVTGELELAYYFTRSPIVAVTGTNGKTTTTTLIGEIFKDAGMNTLVGGNIGSPLIAEVERYGPDDVIVAEVSSFQLETASTFRPKVGVVLNITPDHLDRHGTMGNYAATKARMFANQGPGDFAVLNCDDPLAASLKAGVRSRVIFFSRRKELKEGVWVSGGMIVASLNGHREVVCRSDELGLPGAHNLENALAAVAAAKAMGIESNSLAGTLRRFKGVAHRLEFVAEVDGVRYINDSKGTNPDAAIKALESYGEPIVLIAGGKNKGSDFREFARKVKEKAKVLVVLGQSAGLIAEAARAEGFENILYADGFREAVLLARRVARPGDIVLLSPACASWDMFKSFEERGDLFKEIVLSLKKG.

117–123 (GTNGKTT) serves as a coordination point for ATP.

Belongs to the MurCDEF family.

It is found in the cytoplasm. The enzyme catalyses UDP-N-acetyl-alpha-D-muramoyl-L-alanine + D-glutamate + ATP = UDP-N-acetyl-alpha-D-muramoyl-L-alanyl-D-glutamate + ADP + phosphate + H(+). Its pathway is cell wall biogenesis; peptidoglycan biosynthesis. Its function is as follows. Cell wall formation. Catalyzes the addition of glutamate to the nucleotide precursor UDP-N-acetylmuramoyl-L-alanine (UMA). The protein is UDP-N-acetylmuramoylalanine--D-glutamate ligase of Pelotomaculum thermopropionicum (strain DSM 13744 / JCM 10971 / SI).